Reading from the N-terminus, the 132-residue chain is Protein NrdI (132 aa).

It belongs to the NrdI family.

Probably involved in ribonucleotide reductase function. This is Protein NrdI from Staphylococcus haemolyticus (strain JCSC1435).